Reading from the N-terminus, the 327-residue chain is GMP reductase (327 aa).

The active-site Thioimidate intermediate is the Cys176. 205–228 (IIADGGIRTHGDIAKSIRFGASMV) contributes to the NADP(+) binding site.

It belongs to the IMPDH/GMPR family. GuaC type 2 subfamily.

The catalysed reaction is IMP + NH4(+) + NADP(+) = GMP + NADPH + 2 H(+). In terms of biological role, catalyzes the irreversible NADPH-dependent deamination of GMP to IMP. It functions in the conversion of nucleobase, nucleoside and nucleotide derivatives of G to A nucleotides, and in maintaining the intracellular balance of A and G nucleotides. The polypeptide is GMP reductase (Streptococcus agalactiae serotype Ia (strain ATCC 27591 / A909 / CDC SS700)).